The primary structure comprises 183 residues: Mast cell-expressed membrane protein 1 (183 aa).

Positions 1–26 (MHASASQDKNRRKPGHDEGAHNPDYE) are disordered. The Cytoplasmic portion of the chain corresponds to 1–70 (MHASASQDKN…PPWLYRTIMM (70 aa)). Positions 15-24 (GHDEGAHNPD) are enriched in basic and acidic residues. Residues 71–91 (LYVLLALVFLSCIVLSALVLV) traverse the membrane as a helical; Signal-anchor for type II membrane protein segment. Residues 92–183 (KNSEMSKELW…EKKAQPQPST (92 aa)) lie on the Extracellular side of the membrane. N-linked (GlcNAc...) asparagine glycosylation occurs at Asn-109.

Its subcellular location is the membrane. The chain is Mast cell-expressed membrane protein 1 from Mus musculus (Mouse).